Here is a 414-residue protein sequence, read N- to C-terminus: Gamma-glutamyl phosphate reductase (414 aa).

The protein belongs to the gamma-glutamyl phosphate reductase family.

Its subcellular location is the cytoplasm. The catalysed reaction is L-glutamate 5-semialdehyde + phosphate + NADP(+) = L-glutamyl 5-phosphate + NADPH + H(+). Its pathway is amino-acid biosynthesis; L-proline biosynthesis; L-glutamate 5-semialdehyde from L-glutamate: step 2/2. In terms of biological role, catalyzes the NADPH-dependent reduction of L-glutamate 5-phosphate into L-glutamate 5-semialdehyde and phosphate. The product spontaneously undergoes cyclization to form 1-pyrroline-5-carboxylate. The sequence is that of Gamma-glutamyl phosphate reductase from Clostridium beijerinckii (strain ATCC 51743 / NCIMB 8052) (Clostridium acetobutylicum).